A 233-amino-acid chain; its full sequence is DNA-directed RNA polymerase I subunit RPA34 (233 aa).

S10, S12, S14, and S60 each carry phosphoserine. The segment covering 179–191 (DFHVAEEVKENKK) has biased composition (basic and acidic residues). A disordered region spans residues 179-233 (DFHVAEEVKENKKEPKKRSHHDDEEESSEKKKKKKEKREKREKKDKKDKKKKHRD). Residues 208-233 (KKKKKKEKREKREKKDKKDKKKKHRD) are compositionally biased toward basic residues.

The protein belongs to the eukaryotic RPA34 RNA polymerase subunit family. In terms of assembly, component of the RNA polymerase I (Pol I) complex consisting of 14 subunits: RPA135, RPA190, RPC40, RPA14, RPB5, RPO26, RPA43, RPB8, RPA12, RPB10, RPC19, RPC10, RPA49 and RPA34. The complex is composed of a horseshoe-shaped core containing ten subunits (RPA135, RPA190, RPB5, RPO26, RPB8, RPB10, RPC10, RPA12, RPC19 and RPC40) where RPA135 and RPA190 form the DNA-binding cleft. Outside of the core, RPA14 and RPA43 form the stalk that mediates interactions with transcription initiation factors and newly synthesized RNA. Forms a TFIIF-like heterodimer with RPA49; the heterodimer formed by RPA34 and RPA49 can be dissociated from the Pol I core giving rise to a 12 subunit form A* of Pol I (formerly called pol A) that shows impaired transcript elongation activity and increased sensitivity to alpha-amanitin. The heterodimer formed by RPA34 and RPA49 stabilizes subunit RPA12 and stimulates RPA12-dependent RNA cleavage.

It localises to the nucleus. The protein localises to the nucleolus. Its function is as follows. DNA-dependent RNA polymerases catalyze the transcription of DNA into RNA using the four ribonucleoside triphosphates as substrates. Component of RNA polymerase I (Pol I) which synthesizes ribosomal RNA precursors. Besides, RNA polymerase I has intrinsic RNA cleavage activity. The heterodimer formed by RPA34 and RPA49 stimulates transcript elongation by Pol I. The polypeptide is DNA-directed RNA polymerase I subunit RPA34 (RPA34) (Saccharomyces cerevisiae (strain ATCC 204508 / S288c) (Baker's yeast)).